The following is a 404-amino-acid chain: MEDDAGNCGGLTAFALRLAKRLADDGDNSNRNVVFSPVSLYAALALVASGARGTTLDELVALLGAASLDDLEESVRRAVEVGLADESESGGPRVSYACGVWHDERLALKPAYRAADFQRQPKSSRKKINKWVSKATNKLIREILPDGSVHGGTALVLVNAIYFKGKWSNPFPRERTTTGKFHRLDGSSVDAPFMSSREDQYIGFYDGFKVLKLPYHRTMKNHGDGGDITPAILKHYGENVGLSMYIFLPDARDGLPALVDKMAVASSGTASSSFLRDHRPGRRRIKVGDLRVPRFKVSFYSEMNEVLKGMGIGAAFDVGKVDLSGMIDGELVVVEKVMHRAVVEVNEEGTEAAAATACTMKFLCLTLTSPVDFVADHPFAFFVVEEKSDAVLFAGHVLDPTSLE.

The segment at 349–373 (GTEAAAATACTMKFLCLTLTSPVDF) is RCL.

This sequence belongs to the serpin family.

Probable serine protease inhibitor. The chain is Serpin-Z2B from Oryza sativa subsp. japonica (Rice).